Here is a 650-residue protein sequence, read N- to C-terminus: ATP-binding cassette sub-family G member 3 (650 aa).

Over 1 to 387 (MASNNDPTVI…KNFKGFPWVT (387 aa)) the chain is Cytoplasmic. In terms of domain architecture, ABC transporter spans 37–279 (LSFHNISYQE…FRSAGYNYES (243 aa)). An ABC transmembrane type-2 domain is found at 381-644 (KGFPWVTVIQ…TITYVQLLQV (264 aa)). A helical transmembrane segment spans residues 388-408 (VIQAIITVILATAVGTAFRVL). The Extracellular portion of the chain corresponds to 409–420 (KNDCIEVQMRAG). A helical transmembrane segment spans residues 421-441 (LLYLLTIFQCITSVSAGELFV). At 442–469 (IDRVRFLHEHTSGYYRVSSYFFGKLLAE) the chain is on the cytoplasmic side. A helical transmembrane segment spans residues 470–490 (LIPRRLLPSTVFSLITYVIAG). Residues 491-498 (VKMSMKCF) are Extracellular-facing. Residues 499 to 519 (FTMICTIMVLAYSASSLPLSI) traverse the membrane as a helical segment. The Cytoplasmic portion of the chain corresponds to 520 to 527 (GAGENAVA). The chain crosses the membrane as a helical span at residues 528 to 548 (VPTLLVTIYFVFMLFFSGLSL). The Extracellular segment spans residues 549–623 (YSGSFLPKLS…LSSWGFWENH (75 aa)). A helical membrane pass occupies residues 624–644 (LALVCTMIILLTITYVQLLQV). The Cytoplasmic segment spans residues 645–648 (KNIR).

It belongs to the ABC transporter superfamily. ABCG family. Eye pigment precursor importer (TC 3.A.1.204) subfamily. In terms of assembly, may dimerize with another subunit to form a functional transporter. Highest levels of expression in thymus and spleen. Detected in lung and small intestine.

Its subcellular location is the membrane. The sequence is that of ATP-binding cassette sub-family G member 3 (Abcg3) from Mus musculus (Mouse).